The sequence spans 413 residues: Serine hydroxymethyltransferase (413 aa).

(6S)-5,6,7,8-tetrahydrofolate is bound by residues L118 and 122 to 124 (GHL). Residue K228 is modified to N6-(pyridoxal phosphate)lysine.

Belongs to the SHMT family. As to quaternary structure, homodimer. Pyridoxal 5'-phosphate is required as a cofactor.

The protein resides in the cytoplasm. The enzyme catalyses (6R)-5,10-methylene-5,6,7,8-tetrahydrofolate + glycine + H2O = (6S)-5,6,7,8-tetrahydrofolate + L-serine. The protein operates within one-carbon metabolism; tetrahydrofolate interconversion. Its pathway is amino-acid biosynthesis; glycine biosynthesis; glycine from L-serine: step 1/1. Catalyzes the reversible interconversion of serine and glycine with tetrahydrofolate (THF) serving as the one-carbon carrier. This reaction serves as the major source of one-carbon groups required for the biosynthesis of purines, thymidylate, methionine, and other important biomolecules. Also exhibits THF-independent aldolase activity toward beta-hydroxyamino acids, producing glycine and aldehydes, via a retro-aldol mechanism. This chain is Serine hydroxymethyltransferase, found in Phytoplasma australiense.